Reading from the N-terminus, the 396-residue chain is 1-deoxy-D-xylulose 5-phosphate reductoisomerase (396 aa).

6 residues coordinate NADPH: T15, G16, S17, I18, G41, and N130. K131 lines the 1-deoxy-D-xylulose 5-phosphate pocket. Residue E132 coordinates NADPH. Mn(2+) is bound at residue D155. Residues S156, E157, S181, and H204 each coordinate 1-deoxy-D-xylulose 5-phosphate. Position 157 (E157) interacts with Mn(2+). Position 210 (G210) interacts with NADPH. Residues S217, N222, K223, and E226 each contribute to the 1-deoxy-D-xylulose 5-phosphate site. E226 is a binding site for Mn(2+).

It belongs to the DXR family. Mg(2+) serves as cofactor. Requires Mn(2+) as cofactor.

It carries out the reaction 2-C-methyl-D-erythritol 4-phosphate + NADP(+) = 1-deoxy-D-xylulose 5-phosphate + NADPH + H(+). The protein operates within isoprenoid biosynthesis; isopentenyl diphosphate biosynthesis via DXP pathway; isopentenyl diphosphate from 1-deoxy-D-xylulose 5-phosphate: step 1/6. Functionally, catalyzes the NADPH-dependent rearrangement and reduction of 1-deoxy-D-xylulose-5-phosphate (DXP) to 2-C-methyl-D-erythritol 4-phosphate (MEP). In Bifidobacterium longum (strain NCC 2705), this protein is 1-deoxy-D-xylulose 5-phosphate reductoisomerase.